A 228-amino-acid chain; its full sequence is MQDLKQIITIKGTRDGLSLFIDEDASFEEVLKELEEKIQFSKPKQDEPVVSVKVKLGNRYISGEKEEQIRQVITTDQRFKVIGIDSNLIPINDAKRWMDDSEVKVINRVVRSGQILEIQGDLLLVGDVNPGGRVVASGNIYILGNLLGIAHAGYHGDKDAFIAASYMKPTQLRIADYISRAPDYESDGVYMECGIIDTDQDKITIDSLKVLSKKRKEISGFERRMNNG.

It belongs to the MinC family. As to quaternary structure, interacts with MinD and FtsZ.

Its function is as follows. Cell division inhibitor that blocks the formation of polar Z ring septums. Rapidly oscillates between the poles of the cell to destabilize FtsZ filaments that have formed before they mature into polar Z rings. Prevents FtsZ polymerization. This Oceanobacillus iheyensis (strain DSM 14371 / CIP 107618 / JCM 11309 / KCTC 3954 / HTE831) protein is Probable septum site-determining protein MinC.